The sequence spans 584 residues: MADRDDERHAERDRDELVAQVSYLEKELSVLRRKLADSPRHVRLLEDRLQEAQTALAAANAKNERLVSALKEARDQIVALKEEVDRLSQPPSGFGVFLRARDDGTVEIFTNGRKMRVNVSPSVNVDELRPGQEVMLNEAFNVVEASSYETVGEVVMLKEILEDGERVLVISNHDEERIVRIAEPLRDEPLRAGDSLLLEPRSGYVYERIPKAEVEELILEEVPDISYSDIGGLNGQIEMIRDAVELPYLHKELFREHKLRPPKGVLLYGPPGCGKTLIAKAVANSLAKQVAEKTGRDVGKSFFLNIKGPELLNKYVGETERHIRLVFQRAREKASEGTPVIVFFDEMDSIFRTRGSGVSSDVENTIVPQLLSEIDGVEGLENVIVIGASNREDMIDPAILRPGRLDVKIKIERPDAEAARDIFSKYITPDLPLHPDDLAEHGGSPTATVNAMIQRVVERMYAETEENRFLEVTYANGDKEVLYFKDFNSGAMIQNIVDRAKKMAIKDYLENGSKGLRVSHLLQACVDEFSENEDLPNTTNPDDWARISGKKGERIVYIRTLVSGKKGADAGRSIDTVANTGQYL.

Residues 8 to 90 (RHAERDRDEL…KEEVDRLSQP (83 aa)) adopt a coiled-coil conformation. 272–277 (GCGKTL) is an ATP binding site. Positions 583 to 584 (YL) are docks into pockets in the proteasome alpha-ring.

The protein belongs to the AAA ATPase family. In terms of assembly, homohexamer. Assembles into a hexameric ring structure that caps the 20S proteasome core. Strongly interacts with the prokaryotic ubiquitin-like protein Pup through a hydrophobic interface; the interacting region of ARC lies in its N-terminal coiled-coil domain. There is one Pup binding site per ARC hexamer ring. Upon ATP-binding, the C-terminus of ARC interacts with the alpha-rings of the proteasome core, possibly by binding to the intersubunit pockets.

Its pathway is protein degradation; proteasomal Pup-dependent pathway. Its function is as follows. ATPase which is responsible for recognizing, binding, unfolding and translocation of pupylated proteins into the bacterial 20S proteasome core particle. May be essential for opening the gate of the 20S proteasome via an interaction with its C-terminus, thereby allowing substrate entry and access to the site of proteolysis. Thus, the C-termini of the proteasomal ATPase may function like a 'key in a lock' to induce gate opening and therefore regulate proteolysis. This chain is Proteasome-associated ATPase, found in Thermobifida fusca (strain YX).